The primary structure comprises 329 residues: Aspartate carbamoyltransferase catalytic subunit (329 aa).

Carbamoyl phosphate is bound by residues Arg-66 and Thr-67. Residue Lys-94 participates in L-aspartate binding. Carbamoyl phosphate-binding residues include Arg-116, His-149, and Gln-152. The L-aspartate site is built by Arg-189 and Arg-243. Carbamoyl phosphate is bound by residues Gly-284 and Pro-285.

The protein belongs to the aspartate/ornithine carbamoyltransferase superfamily. ATCase family. As to quaternary structure, heterododecamer (2C3:3R2) of six catalytic PyrB chains organized as two trimers (C3), and six regulatory PyrI chains organized as three dimers (R2).

It catalyses the reaction carbamoyl phosphate + L-aspartate = N-carbamoyl-L-aspartate + phosphate + H(+). It functions in the pathway pyrimidine metabolism; UMP biosynthesis via de novo pathway; (S)-dihydroorotate from bicarbonate: step 2/3. Functionally, catalyzes the condensation of carbamoyl phosphate and aspartate to form carbamoyl aspartate and inorganic phosphate, the committed step in the de novo pyrimidine nucleotide biosynthesis pathway. In Gloeobacter violaceus (strain ATCC 29082 / PCC 7421), this protein is Aspartate carbamoyltransferase catalytic subunit.